A 440-amino-acid polypeptide reads, in one-letter code: Xaa-Pro dipeptidase (440 aa).

Aspartate 244, aspartate 255, histidine 335, glutamate 380, and glutamate 419 together coordinate Mn(2+).

Belongs to the peptidase M24B family. Bacterial-type prolidase subfamily. The cofactor is Mn(2+).

The enzyme catalyses Xaa-L-Pro dipeptide + H2O = an L-alpha-amino acid + L-proline. In terms of biological role, splits dipeptides with a prolyl residue in the C-terminal position. The sequence is that of Xaa-Pro dipeptidase from Shewanella pealeana (strain ATCC 700345 / ANG-SQ1).